The following is a 278-amino-acid chain: Envelope glycoprotein L (278 aa).

An N-terminal signal peptide occupies residues 1–30 (MCRRPDCGFSFSPGPVILLWCCLLLPIVSS). Residues 43-256 (VPAECPELTR…DKYYAGLPPE (214 aa)) enclose the gL betaherpesvirus-type domain. Cysteine 154 and cysteine 159 are disulfide-bonded.

Belongs to the herpesviridae glycoprotein L (gL) family. Betaherpesvirinae gL subfamily. As to quaternary structure, interacts with glycoprotein H (gH); this interaction is necessary for the correct processing and cell surface expression of gH. Forms the envelope pentamer complex (PC) composed of gH, gL, UL128, UL130, and UL131A. The pentamer interacts with host NRP2. Forms the envelope trimer complex composed of gH, gL, and gO. The trimer interacts with host PDGFRA. The trimer also interacts with host EPHA2.

Its subcellular location is the virion membrane. The protein localises to the host cell membrane. It localises to the host Golgi apparatus. It is found in the host trans-Golgi network. Functionally, the heterodimer glycoprotein H-glycoprotein L is required for the fusion of viral and plasma membranes leading to virus entry into the host cell. Acts as a functional inhibitor of gH and maintains gH in an inhibited form. Upon binding to host integrins, gL dissociates from gH leading to activation of the viral fusion glycoproteins gB and gH. In human cytomegalovirus, forms two distincts complexes to mediate viral entry, a trimer and a pentamer at the surface of the virion envelope. The gH-gL-gO trimer is required for infection in fibroblasts by interacting with host PDGFRA, and in glioblastoma cells by interacting with host EPHA2. The gH-gL-UL128-UL130-UL131A pentamer is essential for viral entry in epithelial, endothelial and myeloid cells via interaction with host NRP2. This is Envelope glycoprotein L from Human cytomegalovirus (strain 5160) (HHV-5).